The sequence spans 86 residues: Conidiation-specific protein 10 (86 aa).

Polar residues predominate over residues 1–11; the sequence is MAGTGNDNPGN. The tract at residues 1–86 is disordered; the sequence is MAGTGNDNPG…SGGTGADDDE (86 aa). Residues 49–58 are compositionally biased toward low complexity; sequence SKGGKASSGS. The span at 62-71 shows a compositional bias: basic and acidic residues; sequence GSEKAREAGR. Residues 75 to 86 show a composition bias toward gly residues; it reads KASGGTGADDDE.

Belongs to the con-10 family.

The sequence is that of Conidiation-specific protein 10 (con-10) from Neurospora crassa (strain ATCC 24698 / 74-OR23-1A / CBS 708.71 / DSM 1257 / FGSC 987).